The primary structure comprises 327 residues: Short chain isoprenyl diphosphate synthase (327 aa).

Positions 48, 51, and 80 each coordinate isopentenyl diphosphate. Positions 87 and 91 each coordinate Mg(2+). An all-trans-polyprenyl diphosphate is bound at residue Arg96. An isopentenyl diphosphate-binding site is contributed by Arg97. Positions 176, 177, 214, 231, and 241 each coordinate an all-trans-polyprenyl diphosphate.

Belongs to the FPP/GGPP synthase family. Homodimer. Mg(2+) serves as cofactor.

The protein resides in the cytoplasm. The sequence is that of Short chain isoprenyl diphosphate synthase (idsA) from Methanocaldococcus jannaschii (strain ATCC 43067 / DSM 2661 / JAL-1 / JCM 10045 / NBRC 100440) (Methanococcus jannaschii).